The sequence spans 715 residues: Probable GTP diphosphokinase RSH3, chloroplastic (715 aa).

The N-terminal 64 residues, 1–64 (MVVATTIALY…LLFSGASVKS (64 aa)), are a transit peptide targeting the chloroplast. A compositionally biased stretch (low complexity) spans 65-74 (SSSSSSSHPS). The interval 65-84 (SSSSSSSHPSVGEELASIRH) is disordered. Residues 237–341 (YLQHCVETAM…IKLADRLHNM (105 aa)) form the HD domain.

It belongs to the RelA/SpoT family. In terms of tissue distribution, expressed in roots, hypocotyls, shoots, cotyledons, rosette and cauline leaves, stems, petals, sepals, stamens, pistils and siliques.

It localises to the plastid. It is found in the chloroplast. It catalyses the reaction GTP + ATP = guanosine 3'-diphosphate 5'-triphosphate + AMP. Its function is as follows. Possesses ppGpp (guanosine 3'-diphosphate 5'-diphosphate) synthetase activity in vitro and is able to functionally complement E.coli relA mutants. May be involved in a rapid plant ppGpp-mediated response to pathogens and other stresses. This Arabidopsis thaliana (Mouse-ear cress) protein is Probable GTP diphosphokinase RSH3, chloroplastic (RSH3).